The sequence spans 765 residues: Dipeptidyl peptidase 4 (765 aa).

Topologically, residues 1-6 are cytoplasmic; sequence MKTPWK. Residues 7-29 form a helical; Signal-anchor for type II membrane protein membrane-spanning segment; it reads VLLGLLGLAALITIITVPVVLLN. The Extracellular portion of the chain corresponds to 30-765; sequence KGNDAAADSR…HFIKQCFSLP (736 aa). Residues asparagine 84, asparagine 91, asparagine 149, asparagine 178, asparagine 228, asparagine 280, asparagine 320, asparagine 330, and asparagine 331 are each glycosylated (N-linked (GlcNAc...) asparagine). 3 disulfide bridges follow: cysteine 384–cysteine 393, cysteine 443–cysteine 446, and cysteine 453–cysteine 471. Asparagine 519 is a glycosylation site (N-linked (GlcNAc...) asparagine). Catalysis depends on serine 629, which acts as the Charge relay system. The cysteines at positions 648 and 761 are disulfide-linked. Asparagine 684 is a glycosylation site (N-linked (GlcNAc...) asparagine). Residues aspartate 707 and histidine 739 each act as charge relay system in the active site.

This sequence belongs to the peptidase S9B family. DPPIV subfamily. In terms of assembly, monomer. Homodimer. Heterodimer with Seprase (FAP). Requires homodimerization for optimal dipeptidyl peptidase activity and T-cell costimulation. Found in a membrane raft complex, at least composed of BCL10, CARD11, DPP4 and IKBKB. Associates with collagen. Interacts with PTPRC; the interaction is enhanced in an interleukin-12-dependent manner in activated lymphocytes. Interacts (extracellular domain) with ADA; does not inhibit its dipeptidyl peptidase activity. Interacts with CAV1 (via the N-terminus); the interaction is direct. Interacts (via cytoplasmic tail) with CARD11 (via PDZ domain); its homodimerization is necessary for interaction with CARD11. Interacts with IGF2R; the interaction is direct. Interacts with GPC3. The soluble form (Dipeptidyl peptidase 4 soluble form also named SDPP) derives from the membrane form (Dipeptidyl peptidase 4 membrane form also named MDPP) by proteolytic processing. Post-translationally, N- and O-Glycosylated. In terms of processing, phosphorylated. Mannose 6-phosphate residues in the carbohydrate moiety are necessary for interaction with IGF2R in activated T-cells. Mannose 6-phosphorylation is induced during T-cell activation.

It localises to the secreted. It is found in the cell membrane. The protein resides in the apical cell membrane. Its subcellular location is the cell projection. The protein localises to the invadopodium membrane. It localises to the lamellipodium membrane. It is found in the cell junction. The protein resides in the membrane raft. The enzyme catalyses Release of an N-terminal dipeptide, Xaa-Yaa-|-Zaa-, from a polypeptide, preferentially when Yaa is Pro, provided Zaa is neither Pro nor hydroxyproline.. With respect to regulation, inhibited by GPC3 and diprotin A. Cell surface glycoprotein receptor involved in the costimulatory signal essential for T-cell receptor (TCR)-mediated T-cell activation. Acts as a positive regulator of T-cell coactivation, by binding at least ADA, CAV1, IGF2R, and PTPRC. Its binding to CAV1 and CARD11 induces T-cell proliferation and NF-kappa-B activation in a T-cell receptor/CD3-dependent manner. Its interaction with ADA also regulates lymphocyte-epithelial cell adhesion. In association with FAP is involved in the pericellular proteolysis of the extracellular matrix (ECM), the migration and invasion of endothelial cells into the ECM. May be involved in the promotion of lymphatic endothelial cells adhesion, migration and tube formation. When overexpressed, enhanced cell proliferation, a process inhibited by GPC3. Also acts as a serine exopeptidase with a dipeptidyl peptidase activity that regulates various physiological processes by cleaving peptides in the circulation, including many chemokines, mitogenic growth factors, neuropeptides and peptide hormones. Removes N-terminal dipeptides sequentially from polypeptides having unsubstituted N-termini provided that the penultimate residue is proline. The protein is Dipeptidyl peptidase 4 (DPP4) of Felis catus (Cat).